The sequence spans 231 residues: MSEIKDVIVQGLWKNNSALVQLLGLCPLLAVTSTATNALGLGLATTLVLTLTNLTISTLRHWTPAEIRIPIYVMIIASVVSAVQMLINAYAFGLYQSLGIFIPLIVTNCIVVGRAEAFAAKKGPALSALDGFSIGMGATCAMFVLGSLREIIGNGTLFDGADALLGSWAKVLRLEIFHTDSPFLLAMLPPSAFIGLGLMLAGKYLIDERMKKRRAEAAAERALPNGETGNV.

Helical transmembrane passes span 18-38, 39-59, 63-83, 86-106, 125-145, and 182-202; these read ALVQ…ATNA, LGLG…ISTL, TPAE…VSAV, LINA…PLIV, ALSA…MFVL, and PFLL…MLAG.

This sequence belongs to the NqrDE/RnfAE family. The complex is composed of six subunits: RsxA, RsxB, RsxC, RsxD, RsxE and RsxG.

The protein resides in the cell inner membrane. Functionally, part of a membrane-bound complex that couples electron transfer with translocation of ions across the membrane. Required to maintain the reduced state of SoxR. This Escherichia coli O7:K1 (strain IAI39 / ExPEC) protein is Ion-translocating oxidoreductase complex subunit E.